Here is a 305-residue protein sequence, read N- to C-terminus: tRNA dimethylallyltransferase (305 aa).

12–19 (GPTASGKT) contributes to the ATP binding site. 14-19 (TASGKT) serves as a coordination point for substrate. 3 interaction with substrate tRNA regions span residues 37-40 (DSAL), 161-165 (QRLAR), and 242-247 (RCVGYR).

This sequence belongs to the IPP transferase family. As to quaternary structure, monomer. Requires Mg(2+) as cofactor.

It catalyses the reaction adenosine(37) in tRNA + dimethylallyl diphosphate = N(6)-dimethylallyladenosine(37) in tRNA + diphosphate. Catalyzes the transfer of a dimethylallyl group onto the adenine at position 37 in tRNAs that read codons beginning with uridine, leading to the formation of N6-(dimethylallyl)adenosine (i(6)A). The sequence is that of tRNA dimethylallyltransferase from Psychromonas ingrahamii (strain DSM 17664 / CCUG 51855 / 37).